Reading from the N-terminus, the 475-residue chain is UDP-N-acetylmuramate--L-alanine ligase (475 aa).

114–120 serves as a coordination point for ATP; sequence GTHGKTT.

Belongs to the MurCDEF family.

It localises to the cytoplasm. The enzyme catalyses UDP-N-acetyl-alpha-D-muramate + L-alanine + ATP = UDP-N-acetyl-alpha-D-muramoyl-L-alanine + ADP + phosphate + H(+). Its pathway is cell wall biogenesis; peptidoglycan biosynthesis. Its function is as follows. Cell wall formation. The polypeptide is UDP-N-acetylmuramate--L-alanine ligase (Bartonella quintana (strain Toulouse) (Rochalimaea quintana)).